A 336-amino-acid polypeptide reads, in one-letter code: MKLAVIGGDGIGPEVTAEALKVLDAVLPGVDKTEYDLGARRYHATGELLPDSVIDELRAHDAILLGAIGDPSVPSGVLERGLLLRLRFELDHHINLRPGRLYPGVSSPLAGNPDIDFVVVREGTEGPYTGTGGAIRVGTPNEVATEVSQNTAFGVRRVVVDAFERARRRRKHLTLVHKTNVLTFAGKLWSRIVAEVGRDYPDVEVAYQHIDAATIFMVTDPGRFDVIVTDNLFGDIITDLSAAVCGGIGLAASGNIDGTRTNPSMFEPVHGSAPDIAGQGVADPTAAIMSVALLLAHLGEDAAATRVDRAVERYLATRGNERPATTEVGERIAAAL.

Substrate-binding residues include arginine 87, arginine 97, arginine 121, and aspartate 211. Residues aspartate 211, aspartate 235, and aspartate 239 each contribute to the Mg(2+) site. 271 to 283 (GSAPDIAGQGVAD) contacts NAD(+).

The protein belongs to the isocitrate and isopropylmalate dehydrogenases family. LeuB type 2 subfamily. As to quaternary structure, homodimer. The cofactor is Mg(2+). Mn(2+) is required as a cofactor.

The protein resides in the cytoplasm. The enzyme catalyses (2R,3S)-3-isopropylmalate + NAD(+) = 4-methyl-2-oxopentanoate + CO2 + NADH. It functions in the pathway amino-acid biosynthesis; L-leucine biosynthesis; L-leucine from 3-methyl-2-oxobutanoate: step 3/4. Its function is as follows. Catalyzes the oxidation of 3-carboxy-2-hydroxy-4-methylpentanoate (3-isopropylmalate) to 3-carboxy-4-methyl-2-oxopentanoate. The product decarboxylates to 4-methyl-2 oxopentanoate. This Mycobacterium avium (strain 104) protein is 3-isopropylmalate dehydrogenase.